Reading from the N-terminus, the 57-residue chain is U17-myrmicitoxin-Tb1a (57 aa).

The first 29 residues, 1-29, serve as a signal peptide directing secretion; sequence MEKNRTNIFSVYLMITFLLISIFITMVMS. A propeptide spanning residues 30 to 33 is cleaved from the precursor; sequence DGEA. A disulfide bond links cysteine 42 and cysteine 53. The residue at position 56 (alanine 56) is an Alanine amide.

Post-translationally, O-glycosylated. In terms of tissue distribution, expressed by the venom gland.

The protein localises to the secreted. In terms of biological role, serine protease inhibitor which exhibits antifibrinolytic, antielastolytic and antimicrobial activities. Displays antimicrobial activity against bacteria and fungi. Likely functions in the innate immune response to microbial infection and possibly in the venom, as an antifibrinolytic agent. The chain is U17-myrmicitoxin-Tb1a from Tetramorium bicarinatum (Tramp ant).